The sequence spans 525 residues: GMP synthase [glutamine-hydrolyzing] (525 aa).

The region spanning 8–206 is the Glutamine amidotransferase type-1 domain; that stretch reads PLLILDFGSQ…VVDICKASTD (199 aa). Cys85 (nucleophile) is an active-site residue. Residues His180 and Glu182 contribute to the active site. The 194-residue stretch at 207–400 folds into the GMPS ATP-PPase domain; sequence WTPEHIIDEA…LGLPHDMVYR (194 aa). Residue 234–240 coordinates ATP; the sequence is SGGVDSS.

In terms of assembly, homodimer.

The enzyme catalyses XMP + L-glutamine + ATP + H2O = GMP + L-glutamate + AMP + diphosphate + 2 H(+). The protein operates within purine metabolism; GMP biosynthesis; GMP from XMP (L-Gln route): step 1/1. Functionally, catalyzes the synthesis of GMP from XMP. This Legionella pneumophila (strain Paris) protein is GMP synthase [glutamine-hydrolyzing].